The sequence spans 154 residues: RNA-binding protein PAB1135 (154 aa).

In terms of assembly, homodimer in solution.

Functionally, in vitro, binds efficiently double-stranded RNAs in a non-sequence specific manner. The chain is RNA-binding protein PAB1135 from Pyrococcus abyssi (strain GE5 / Orsay).